A 173-amino-acid chain; its full sequence is Crossover junction endodeoxyribonuclease RuvC (173 aa).

Catalysis depends on residues D8, E67, and D139. D8, E67, and D139 together coordinate Mg(2+).

Belongs to the RuvC family. Homodimer which binds Holliday junction (HJ) DNA. The HJ becomes 2-fold symmetrical on binding to RuvC with unstacked arms; it has a different conformation from HJ DNA in complex with RuvA. In the full resolvosome a probable DNA-RuvA(4)-RuvB(12)-RuvC(2) complex forms which resolves the HJ. The cofactor is Mg(2+).

The protein localises to the cytoplasm. It catalyses the reaction Endonucleolytic cleavage at a junction such as a reciprocal single-stranded crossover between two homologous DNA duplexes (Holliday junction).. In terms of biological role, the RuvA-RuvB-RuvC complex processes Holliday junction (HJ) DNA during genetic recombination and DNA repair. Endonuclease that resolves HJ intermediates. Cleaves cruciform DNA by making single-stranded nicks across the HJ at symmetrical positions within the homologous arms, yielding a 5'-phosphate and a 3'-hydroxyl group; requires a central core of homology in the junction. The consensus cleavage sequence is 5'-(A/T)TT(C/G)-3'. Cleavage occurs on the 3'-side of the TT dinucleotide at the point of strand exchange. HJ branch migration catalyzed by RuvA-RuvB allows RuvC to scan DNA until it finds its consensus sequence, where it cleaves and resolves the cruciform DNA. This chain is Crossover junction endodeoxyribonuclease RuvC, found in Pectobacterium carotovorum subsp. carotovorum (strain PC1).